The primary structure comprises 219 residues: Probable lipoprotein YiaD (219 aa).

The N-terminal stretch at 1 to 20 (MKKRVYLIAAVVSGALAVSG) is a signal peptide. Cys21 carries N-palmitoyl cysteine lipidation. Cys21 carries the S-diacylglycerol cysteine lipid modification. The next 2 membrane-spanning stretches (helical) occupy residues 37–55 (IGAG…LSSS) and 62–84 (GALI…MDVQ). Residues 103–219 (GDNIILNMPN…RRVEITLSPL (117 aa)) form the OmpA-like domain.

Its subcellular location is the cell inner membrane. It localises to the cell outer membrane. Functionally, suppresses temperature-sensitive mutations in BamB when overexpressed. This is Probable lipoprotein YiaD (yiaD) from Escherichia coli (strain K12).